The sequence spans 340 residues: UDP-glucose 4-epimerase (340 aa).

NAD(+)-binding positions include 12–13 (FI), 32–37 (DNYGNS), 59–60 (DV), 81–85 (FAGLK), asparagine 100, serine 125, tyrosine 150, lysine 154, and phenylalanine 179. 2 residues coordinate substrate: serine 125 and tyrosine 150. The Proton acceptor role is filled by tyrosine 150. Substrate is bound by residues asparagine 180, 200 to 201 (NL), 217 to 219 (QVY), arginine 232, and 292 to 295 (RPGD).

Belongs to the NAD(P)-dependent epimerase/dehydratase family. Homodimer. The cofactor is NAD(+).

The enzyme catalyses UDP-alpha-D-glucose = UDP-alpha-D-galactose. It participates in carbohydrate metabolism; galactose metabolism. In terms of biological role, involved in the metabolism of galactose. Catalyzes the conversion of UDP-galactose (UDP-Gal) to UDP-glucose (UDP-Glc) through a mechanism involving the transient reduction of NAD. Can also epimerize UDP-GalNAc to UDP-GlcNAc. Involved in the lacto-N-biose I/galacto-N-biose (LNB/GNB) degradation pathway, which is important for host intestinal colonization by bifidobacteria. The polypeptide is UDP-glucose 4-epimerase (lnpD) (Bifidobacterium longum subsp. longum (strain ATCC 15707 / DSM 20219 / JCM 1217 / NCTC 11818 / E194b)).